The primary structure comprises 278 residues: Large ribosomal subunit protein uL2 (278 aa).

Disordered regions lie at residues 1-20 (MGIR…SVSD), 25-58 (TRST…GGGH), and 223-278 (GVVM…GKKR). Over residues 37 to 58 (LHGKGGRNAHGRITTRHKGGGH) the composition is skewed to basic residues. Positions 253-268 (PEGRTRKPNKPSDKLI) are enriched in basic and acidic residues. Over residues 269-278 (VRRRRTGKKR) the composition is skewed to basic residues.

This sequence belongs to the universal ribosomal protein uL2 family. In terms of assembly, part of the 50S ribosomal subunit. Forms a bridge to the 30S subunit in the 70S ribosome.

Its function is as follows. One of the primary rRNA binding proteins. Required for association of the 30S and 50S subunits to form the 70S ribosome, for tRNA binding and peptide bond formation. It has been suggested to have peptidyltransferase activity; this is somewhat controversial. Makes several contacts with the 16S rRNA in the 70S ribosome. The polypeptide is Large ribosomal subunit protein uL2 (Mycolicibacterium smegmatis (strain ATCC 700084 / mc(2)155) (Mycobacterium smegmatis)).